A 117-amino-acid polypeptide reads, in one-letter code: V-type sodium ATPase subunit F (117 aa).

The interval Met1 to Glu20 is disordered. Residues Arg7–Glu20 show a composition bias toward basic and acidic residues.

Belongs to the V-ATPase G subunit family.

Functionally, involved in ATP-driven sodium extrusion. This chain is V-type sodium ATPase subunit F (ntpF), found in Enterococcus hirae (strain ATCC 9790 / DSM 20160 / JCM 8729 / LMG 6399 / NBRC 3181 / NCIMB 6459 / NCDO 1258 / NCTC 12367 / WDCM 00089 / R).